Here is a 697-residue protein sequence, read N- to C-terminus: MNYLFASTNFGCEELLEKELRALGAKNLKVVKGGIYYEGEDSILYNSLMWSRIASRIFLCIKKFTIKNSNDLYKNTYNINWTQILYLEKTFLVKFRGTNNIIRNSLFGALKIKDAIVDTFYQKYSARPNINLLTPDVRIISYLCQNLVHIMLDLSGEALNKRGYRKFFNISPIKENLSAAIILSSGWKKNTPLIDPMCGSGTLLIEAAMISSDRAPGLKRTEWGFKSWKGHKEKVWKETLKKAKERFKIGIKKCLKNYFIGYDCNPDVIKKAQKNVINANLENIISFFACNLSHLKNPYQKEEIGTLISNPPYGERCKTENNLIALYIELGIMSKKYFEKWNLSVFSSSEFLLNFLQMKSYKNFCLKNGPLYCTLKNYEIFLNKFNNTNKEYENRLEKNFKKLKKWNDLKEIECFRVYDSDLPNYKLIVDVYKKWLVIQEYQAPKSINYEKAHKRLCSAIYHSKEILSIPTNNVVIKFRKKQKRKEQYQKLFNSNSFFIIREYHVKLLVNLIDYLDTGLFSEHRLVRKLIGSMSKGKDFLNLFSYTGAASVYAGLGKSKSITTVDISNTYIQWSMRNMSINNLINSKNIFIQKDCLEWIISTKNKFDLIFINPPTFSNSKRMKKSFELKRDYIKLMINLKQILRKDGNIIFSSSTHNFEIDLNNIKKINLYAKKITNLVKTKDFLKKNYHSWLIKHI.

The region spanning 43–154 is the THUMP domain; the sequence is ILYNSLMWSR…QNLVHIMLDL (112 aa).

The protein belongs to the methyltransferase superfamily. RlmKL family.

Its subcellular location is the cytoplasm. The catalysed reaction is guanosine(2445) in 23S rRNA + S-adenosyl-L-methionine = N(2)-methylguanosine(2445) in 23S rRNA + S-adenosyl-L-homocysteine + H(+). It carries out the reaction guanosine(2069) in 23S rRNA + S-adenosyl-L-methionine = N(2)-methylguanosine(2069) in 23S rRNA + S-adenosyl-L-homocysteine + H(+). Specifically methylates the guanine in position 2445 (m2G2445) and the guanine in position 2069 (m7G2069) of 23S rRNA. The protein is Ribosomal RNA large subunit methyltransferase K/L of Buchnera aphidicola subsp. Schizaphis graminum (strain Sg).